We begin with the raw amino-acid sequence, 417 residues long: MSAEIICVGTELLLGDILNSNSQFLGTELAKLGIPHYYQTVVGDNLERLKQVIKIAISRASILIFTGGLGPTPDDLTTQAIAEFFQTPLEENPEILADITEKFAQIGRKMATNNRKQALIPVGADVLPNPSGTAPGIIWQPQEGVTILTFPGVPSEMKQMWQQTAIPFLKSQGWGKELIYSRMMRFRGIGESALAEKVAHLLELANPTVAPYAGLGEARLRITAKAKSLTDAMALIEPVSQEILTLTGDDYYGADQDTLPSVVGQQLRQVAQTVSVAESCTGGGLGEMLTQIPGSSEYFLGGIIAYDNRVKNALLGVNQQDLDQFGAVSEPVAKQMALGVKEKIGSDWGISITGIAGPGGGTDTKPVGLVYIGIADPNGQVEGFEYRLGTRRDRLAIRYLSACNALDQLRRKLLIKI.

Belongs to the CinA family.

The sequence is that of CinA-like protein from Gloeothece citriformis (strain PCC 7424) (Cyanothece sp. (strain PCC 7424)).